Here is a 105-residue protein sequence, read N- to C-terminus: DNA-binding protein HU (105 aa).

Belongs to the bacterial histone-like protein family.

Its function is as follows. Histone-like DNA-binding protein which is capable of wrapping DNA to stabilize it, and thus to prevent its denaturation under extreme environmental conditions. This chain is DNA-binding protein HU (hup), found in Treponema pallidum (strain Nichols).